The sequence spans 32 residues: Dermatoxin-J1 (32 aa).

Gln-32 bears the Glutamine amide mark.

Expressed by the skin glands.

Its subcellular location is the secreted. Antimicrobial peptide. This Phasmahyla jandaia (Jandaia leaf frog) protein is Dermatoxin-J1.